Consider the following 1044-residue polypeptide: Elongation factor 3 (1044 aa).

The stretch at 5–42 (AQSIKVLGELFEKLSVATAENREATATEIASFLNGNII) is one HEAT 1 repeat. ADP is bound by residues Ile-42 and His-44. One copy of the HEAT 2 repeat lies at 45–80 (DVPEEFFKNLTKAVKDKKTAAAALETIAHIANENNL). ADP is bound at residue Ser-83. HEAT repeat units lie at residues 86 to 123 (PYIV…AIDP), 124 to 162 (VAIK…AAKT), 166 to 203 (LRMP…TVDN), 205 to 241 (DIER…EVTP), 242 to 279 (ATLS…LVED), and 285 to 323 (PFLE…VGNV). ADP-binding residues include Thr-392, His-396, and Glu-397. ABC transporter domains are found at residues 426-641 (DEGE…YYEL) and 667-993 (VKVS…KKED). Asn-703, Glu-922, Asn-925, and His-951 together coordinate ADP. Residues 975–1044 (GHNWVSGQGS…DAYVSSDDEF (70 aa)) are disordered. Over residues 987 to 999 (RLEKKEDEGDKFD) the composition is skewed to basic and acidic residues. Positions 1009–1031 (NKKKKLSSAELRKKKKERMKKKK) are enriched in basic residues.

It belongs to the ABC transporter superfamily. ABCF family. EF3 subfamily. In terms of assembly, monomer.

It is found in the cytoplasm. The catalysed reaction is ATP + H2O = ADP + phosphate + H(+). The protein operates within protein biosynthesis; polypeptide chain elongation. Functionally, ribosome-dependent ATPase that functions in cytoplasmic translation elongation. Required for the ATP-dependent release of deacylated tRNA from the ribosomal E-site during protein biosynthesis. Stimulates the eEF1A-dependent binding of aminoacyl-tRNA to the ribosomal A-site, which has reduced affinity for tRNA as long as the E-site is occupied. Assists translation termination by stimulating the release of nascent protein from the ribosome by release factors. The sequence is that of Elongation factor 3 (TEF3) from Eremothecium gossypii (strain ATCC 10895 / CBS 109.51 / FGSC 9923 / NRRL Y-1056) (Yeast).